Consider the following 420-residue polypeptide: ATP phosphoribosyltransferase regulatory subunit (420 aa).

It belongs to the class-II aminoacyl-tRNA synthetase family. HisZ subfamily. As to quaternary structure, heteromultimer composed of HisG and HisZ subunits.

The protein localises to the cytoplasm. Its pathway is amino-acid biosynthesis; L-histidine biosynthesis; L-histidine from 5-phospho-alpha-D-ribose 1-diphosphate: step 1/9. In terms of biological role, required for the first step of histidine biosynthesis. May allow the feedback regulation of ATP phosphoribosyltransferase activity by histidine. This Bacillus anthracis (strain A0248) protein is ATP phosphoribosyltransferase regulatory subunit.